A 576-amino-acid chain; its full sequence is WAP, Kazal, immunoglobulin, Kunitz and NTR domain-containing protein 2 (576 aa).

The signal sequence occupies residues 1-34; sequence MWAPRCRRFWSRWEQVAALLLLLLLLGVPPRSLA. One can recognise a WAP domain in the interval 39 to 92; the sequence is RYSHAGICPNDMNPNLWVDAQSTCRRECETDQECETYEKCCPNVCGTKSCVAAR. 8 disulfides stabilise this stretch: C46–C79, C62–C83, C66–C78, C72–C88, C134–C164, C138–C157, C146–C175, and C231–C287. The region spanning 126 to 177 is the Kazal-like domain; sequence WDGQPVCKCKDRCEKEPSFTCASDGLTYYNRCYMDAEACSKGITLAVVTCRY. An Ig-like C2-type domain is found at 210–303; that stretch reads PALLNNPVHQ…GVLRADFPLS (94 aa). Residue N319 is glycosylated (N-linked (GlcNAc...) asparagine). 9 disulfides stabilise this stretch: C328–C378, C337–C361, C353–C374, C386–C436, C395–C419, C411–C432, C445–C515, C448–C517, and C459–C566. BPTI/Kunitz inhibitor domains lie at 328-378 and 386-436; these read CLKP…MLAC and CSLP…EESC. The NTR domain maps to 445 to 566; it reads CRACKPRQKL…LREVMHKKTC (122 aa). N-linked (GlcNAc...) asparagine glycosylation occurs at N519.

It belongs to the WFIKKN family. In terms of assembly, interacts with both mature and propeptide myostatin/MSTN. Primarily expressed in ovary, testis and brain, but not in liver. In fetal tissues, it is primarily expressed in brain, skeletal muscle, thymus and kidney.

It localises to the secreted. In terms of biological role, protease-inhibitor that contains multiple distinct protease inhibitor domains. Probably has serine protease- and metalloprotease-inhibitor activity. Inhibits the biological activity of mature myostatin, but not activin. The protein is WAP, Kazal, immunoglobulin, Kunitz and NTR domain-containing protein 2 (WFIKKN2) of Homo sapiens (Human).